The sequence spans 82 residues: Large ribosomal subunit protein bL27c (82 aa).

Residues M1–G22 are disordered.

The protein belongs to the bacterial ribosomal protein bL27 family.

The protein localises to the plastid. It is found in the chloroplast. The chain is Large ribosomal subunit protein bL27c (rpl27) from Chrysotila carterae (Marine alga).